Here is a 93-residue protein sequence, read N- to C-terminus: Small ribosomal subunit protein bS20 (93 aa).

Over residues 1–11 (MPQHKSAEKRV) the composition is skewed to basic and acidic residues. Residues 1 to 23 (MPQHKSAEKRVRQSKRRNARNRV) are disordered. A compositionally biased stretch (basic residues) spans 12 to 23 (RQSKRRNARNRV).

The protein belongs to the bacterial ribosomal protein bS20 family.

Its function is as follows. Binds directly to 16S ribosomal RNA. This Chloroherpeton thalassium (strain ATCC 35110 / GB-78) protein is Small ribosomal subunit protein bS20.